Here is a 481-residue protein sequence, read N- to C-terminus: MRHSKRTHCPDWDSRESWGHESYSGSHKRKRRSHSSTQENRHCKPHHQFKDSDCHYLEARCLNERDYRDRRYIDEYRNDYCEGYVPRHYHRDVESTYRIHCSKSSVRSRRSSPKRKRNRPCASHQSHSKSHRRKRSRSIEDDEEGHLICQSGDVLRARYEIVDTLGEGAFGKVVECIDHGMDGLHVAVKIVKNVGRYREAARSEIQVLEHLNSTDPNSVFRCVQMLEWFDHHGHVCIVFELLGLSTYDFIKENSFLPFQIDHIRQMAYQICQSINFLHHNKLTHTDLKPENILFVKSDYVVKYNSKMKRDERTLKNTDIKVVDFGSATYDDEHHSTLVSTRHYRAPEVILALGWSQPCDVWSIGCILIEYYLGFTVFQTHDSKEHLAMMERILGPIPAHMIQKTRKRKYFHHNQLDWDEHSSAGRYVRRRCKPLKEFMLCHDEEHEKLFDLVRRMLEYDPARRITLDEALQHPFFDLLKRK.

Disordered regions lie at residues 1–47 (MRHS…KPHH) and 102–143 (SKSS…EDDE). A compositionally biased stretch (basic and acidic residues) spans 8–19 (HCPDWDSRESWG). Basic residues-rich tracts occupy residues 106 to 119 (VRSR…KRNR) and 126 to 136 (SHSKSHRRKRS). Residues Ser136 and Ser138 each carry the phosphoserine modification. The 317-residue stretch at 159–475 (YEIVDTLGEG…LDEALQHPFF (317 aa)) folds into the Protein kinase domain. ATP-binding positions include 165–173 (LGEGAFGKV) and Lys189. The Proton acceptor role is filled by Asp286.

The protein belongs to the protein kinase superfamily. CMGC Ser/Thr protein kinase family. Lammer subfamily. Interacts with UBL5. In terms of processing, autophosphorylates on all three types of residues. As to expression, expressed in the hippocampus, the cerebellum and the olfactory bulb.

It is found in the nucleus. It catalyses the reaction L-seryl-[protein] + ATP = O-phospho-L-seryl-[protein] + ADP + H(+). The enzyme catalyses L-threonyl-[protein] + ATP = O-phospho-L-threonyl-[protein] + ADP + H(+). The catalysed reaction is L-tyrosyl-[protein] + ATP = O-phospho-L-tyrosyl-[protein] + ADP + H(+). TG003 inhibits its kinase activity and affects the regulation of alternative splicing mediated by phosphorylation of SR proteins. Functionally, dual specificity kinase acting on both serine/threonine and tyrosine-containing substrates. Phosphorylates serine- and arginine-rich (SR) proteins of the spliceosomal complex and may be a constituent of a network of regulatory mechanisms that enable SR proteins to control RNA splicing. Phosphorylates SRSF1 and SRSF3. Required for the regulation of alternative splicing of MAPT/TAU. Regulates the alternative splicing of tissue factor (F3) pre-mRNA in endothelial cells. The chain is Dual specificity protein kinase CLK4 (Clk4) from Mus musculus (Mouse).